A 113-amino-acid polypeptide reads, in one-letter code: Hydrogenase maturation factor HypA (113 aa).

Position 2 (histidine 2) interacts with Ni(2+). Zn(2+) contacts are provided by cysteine 73, cysteine 76, cysteine 89, and cysteine 92.

It belongs to the HypA/HybF family.

Functionally, involved in the maturation of [NiFe] hydrogenases. Required for nickel insertion into the metal center of the hydrogenase. This is Hydrogenase maturation factor HypA from Azotobacter vinelandii.